The following is a 598-amino-acid chain: Fumarate reductase flavoprotein subunit (598 aa).

FAD contacts are provided by residues 12-16 (GAGGA), 36-38 (ISK), 44-52 (SHTVAAEGG), 156-158 (HFV), and aspartate 212. Histidine 45 carries the tele-8alpha-FAD histidine modification. Active-site residues include histidine 233 and arginine 249. FAD-binding positions include 356–357 (HY), glutamate 380, and 391–397 (RLGSNSL). Positions 577-598 (AKRVYGGEATAQDKQNKEKANG) are disordered.

Belongs to the FAD-dependent oxidoreductase 2 family. FRD/SDH subfamily. Part of an enzyme complex containing four subunits: a flavoprotein (FrdA), an iron-sulfur protein (FrdB), and two hydrophobic anchor proteins (FrdC and FrdD). The cofactor is FAD.

The protein localises to the cell inner membrane. The enzyme catalyses a quinone + succinate = fumarate + a quinol. The catalysed reaction is a menaquinone + succinate = a menaquinol + fumarate. In terms of biological role, two distinct, membrane-bound, FAD-containing enzymes are responsible for the catalysis of fumarate and succinate interconversion; the fumarate reductase is used in anaerobic growth, and the succinate dehydrogenase is used in aerobic growth. In Proteus vulgaris, this protein is Fumarate reductase flavoprotein subunit (frdA).